The sequence spans 137 residues: Large ribosomal subunit protein bL17 (137 aa).

Belongs to the bacterial ribosomal protein bL17 family. In terms of assembly, part of the 50S ribosomal subunit. Contacts protein L32.

The protein is Large ribosomal subunit protein bL17 of Bradyrhizobium sp. (strain BTAi1 / ATCC BAA-1182).